The sequence spans 237 residues: UPF0502 protein HEAR1280 (237 aa).

Residues 1–13 show a composition bias toward polar residues; the sequence is MNTEVMHSTSTES. Residues 1–21 form a disordered region; the sequence is MNTEVMHSTSTESDAQEKPQA.

The protein belongs to the UPF0502 family.

This Herminiimonas arsenicoxydans protein is UPF0502 protein HEAR1280.